The sequence spans 356 residues: Phosphatidylglycerol--prolipoprotein diacylglyceryl transferase (356 aa).

A run of 4 helical transmembrane segments spans residues 24 to 44 (IKWYGIFITVGFVLAIILACV), 59 to 79 (WFVFIGIPVSLLGARIWSFII), 103 to 123 (LAIEGGVLLTVIAALIYFPLV), and 144 to 164 (VSMWVYADAIVPCILVGQIIG). R165 is a binding site for a 1,2-diacyl-sn-glycero-3-phospho-(1'-sn-glycerol). The next 2 membrane-spanning stretches (helical) occupy residues 209–229 (PFFLYESFINFWFFLAIYIGG) and 265–285 (FATSIVMSVLFALFGIILLVC).

Belongs to the Lgt family.

It is found in the cell membrane. It carries out the reaction L-cysteinyl-[prolipoprotein] + a 1,2-diacyl-sn-glycero-3-phospho-(1'-sn-glycerol) = an S-1,2-diacyl-sn-glyceryl-L-cysteinyl-[prolipoprotein] + sn-glycerol 1-phosphate + H(+). It participates in protein modification; lipoprotein biosynthesis (diacylglyceryl transfer). Its function is as follows. Catalyzes the transfer of the diacylglyceryl group from phosphatidylglycerol to the sulfhydryl group of the N-terminal cysteine of a prolipoprotein, the first step in the formation of mature lipoproteins. This is Phosphatidylglycerol--prolipoprotein diacylglyceryl transferase from Malacoplasma penetrans (strain HF-2) (Mycoplasma penetrans).